A 137-amino-acid chain; its full sequence is uncharacterized protein (137 aa).

Belongs to the ycf72 family.

Its subcellular location is the plastid. It is found in the chloroplast. This is an uncharacterized protein from Zea mays (Maize).